We begin with the raw amino-acid sequence, 359 residues long: CCAAT/enhancer-binding protein alpha (359 aa).

Residues 1–55 (MESADFYEVEPRPPMSSHLQSPPHAPSNAAFGFPRGAGPAPPPAPPAAPEPLGGI) are disordered. Positions 1–70 (MESADFYEVE…SIDISAYIDP (70 aa)) are required to repress E2F1:TFDP1-mediated transcription, to inhibit cell cycle and to induce adipocyte differentiation. Positions 29 to 38 (AAFGFPRGAG) are enriched in low complexity. Over residues 39 to 49 (PAPPPAPPAAP) the composition is skewed to pro residues. The tract at residues 54–72 (GICEHETSIDISAYIDPAA) is required for interaction with TRIB1. The required to induce adipocyte differentiation stretch occupies residues 126-200 (PPGYGCAAAG…HASPAHLAAP (75 aa)). At lysine 159 the chain carries N6-acetyllysine; alternate. Lysine 159 participates in a covalent cross-link: Glycyl lysine isopeptide (Lys-Gly) (interchain with G-Cter in SUMO); alternate. A Glycyl lysine isopeptide (Lys-Gly) (interchain with G-Cter in SUMO2); alternate cross-link involves residue lysine 159. 2 disordered regions span residues 176 to 195 (LFPYQPPPPPPPPHPHASPA) and 213 to 293 (TMHL…RERN). The span at 179 to 191 (YQPPPPPPPPHPH) shows a compositional bias: pro residues. Residues 180-194 (QPPPPPPPPHPHASP) form a required to functionally cooperate with SREBF1 in promoter activation region. Serine 193 bears the Phosphoserine mark. A compositionally biased stretch (pro residues) spans 220–232 (HPTPPPTPVPSPH). Threonine 222 and threonine 226 each carry phosphothreonine; by GSK3. Residue serine 230 is modified to Phosphoserine; by GSK3. Positions 233–255 (AAPALGAAGLPGPGSALKGLAGA) are enriched in low complexity. The interaction with FOXO1 stretch occupies residues 240–359 (AGLPGPGSAL…SLVKAMGNCA (120 aa)). The segment covering 261–272 (TGGGGGGSGAGA) has biased composition (gly residues). Positions 277–293 (KSVDKNSNEYRVRRERN) are enriched in basic and acidic residues. The bZIP domain occupies 283-346 (SNEYRVRRER…DTLRGIFRQL (64 aa)). The DNA-binding element occupies 286-301 (YRVRRERNNIAVRKSR). A basic motif region spans residues 287-314 (RVRRERNNIAVRKSRDKAKQRNVETQQK). The segment at 318 to 346 (LTSDNDRLRKRVEQLSRELDTLRGIFRQL) is leucine-zipper.

This sequence belongs to the bZIP family. C/EBP subfamily. In terms of assembly, binds DNA as a homodimer and as a heterodimer. Can form stable heterodimers with CEBPB, CEBPD, CEBPE and CEBPG. Interacts with PRDM16. Interacts with UBN1. Interacts with ZNF638; this interaction increases transcriptional activation. Interacts with the complex TFDP2:E2F1; the interaction prevents CEBPA binding to target gene promoters and represses its transcriptional activity. Interacts with RB1. Interacts (when phosphorylated at Ser-193) with CDK2, CDK4, E2F4 and SMARCA2. Interacts with SREBPF1. Interacts with FOXO1 (via the Fork-head domain); the interaction increases when FOXO1 is deacetylated. Interacts with SIX1. Interacts (via recognition sequence) with TRIB1. Interacts (via bZIP domain) with OVOL2 (via zinc-finger domains); the interaction inhibits the transcription factor activity of CEBPA and is required to repress adipogenesis. As to quaternary structure, interacts with TAF1A and UBTF. Interacts with TAF1A and UBTF. Interacts with NPM1. Sumoylated, sumoylation blocks the inhibitory effect on cell proliferation by disrupting the interaction with SMARCA2. In terms of processing, phosphorylation at Ser-193 is required for interaction with CDK2, CDK4 and SWI/SNF complex leading to cell cycle inhibition. Dephosphorylated at Ser-193 by protein phosphatase 2A (PP2A) through PI3K/AKT signaling pathway regulation. Phosphorylation at Thr-222 and Thr-226 by GSK3 is constitutive in adipose tissue and lung. In liver, both Thr-222 and Thr-226 are phosphorylated only during feeding but not during fasting. Phosphorylation of the GSK3 consensus sites selectively decreases transactivation activity on IRE-controlled promoters. Post-translationally, ubiquitinated by COP1 upon interaction with TRIB1. In terms of tissue distribution, isoform 2 and isoform 3 are expressed in adipose tissue and liver (at protein level).

The protein resides in the nucleus. Its subcellular location is the nucleolus. Its function is as follows. Transcription factor that coordinates proliferation arrest and the differentiation of myeloid progenitors, adipocytes, hepatocytes, and cells of the lung and the placenta. Binds directly to the consensus DNA sequence 5'-T[TG]NNGNAA[TG]-3' acting as an activator on distinct target genes. During early embryogenesis, plays essential and redundant functions with CEBPB. Essential for the transition from common myeloid progenitors (CMP) to granulocyte/monocyte progenitors (GMP). Critical for the proper development of the liver and the lung. Necessary for terminal adipocyte differentiation, is required for postnatal maintenance of systemic energy homeostasis and lipid storage. To regulate these different processes at the proper moment and tissue, interplays with other transcription factors and modulators. Down-regulates the expression of genes that maintain cells in an undifferentiated and proliferative state through E2F1 repression, which is critical for its ability to induce adipocyte and granulocyte terminal differentiation. Reciprocally E2F1 blocks adipocyte differentiation by binding to specific promoters and repressing CEBPA binding to its target gene promoters. Proliferation arrest also depends on a functional binding to SWI/SNF complex. In liver, regulates gluconeogenesis and lipogenesis through different mechanisms. To regulate gluconeogenesis, functionally cooperates with FOXO1 binding to IRE-controlled promoters and regulating the expression of target genes such as PCK1 or G6PC1. To modulate lipogenesis, interacts and transcriptionally synergizes with SREBF1 in promoter activation of specific lipogenic target genes such as ACAS2. In adipose tissue, seems to act as FOXO1 coactivator accessing to ADIPOQ promoter through FOXO1 binding sites. Functionally, can act as dominant-negative. Binds DNA and have transctivation activity, even if much less efficiently than isoform 2. Does not inhibit cell proliferation. Directly and specifically enhances ribosomal DNA transcription interacting with RNA polymerase I-specific cofactors and inducing histone acetylation. The polypeptide is CCAAT/enhancer-binding protein alpha (Mus musculus (Mouse)).